Here is a 352-residue protein sequence, read N- to C-terminus: uncharacterized protein (352 aa).

The signal sequence occupies residues 1–21 (MNVDSRVFRFFLVFLILVVVA).

The protein belongs to the bacterial solute-binding protein 1 family. WtpA subfamily.

This is an uncharacterized protein from Methanosarcina acetivorans (strain ATCC 35395 / DSM 2834 / JCM 12185 / C2A).